A 266-amino-acid chain; its full sequence is Hydroxyethylthiazole kinase (266 aa).

Substrate is bound at residue M43. The ATP site is built by R119 and T166. A substrate-binding site is contributed by G193.

The protein belongs to the Thz kinase family. It depends on Mg(2+) as a cofactor.

The enzyme catalyses 5-(2-hydroxyethyl)-4-methylthiazole + ATP = 4-methyl-5-(2-phosphooxyethyl)-thiazole + ADP + H(+). Its pathway is cofactor biosynthesis; thiamine diphosphate biosynthesis; 4-methyl-5-(2-phosphoethyl)-thiazole from 5-(2-hydroxyethyl)-4-methylthiazole: step 1/1. Functionally, catalyzes the phosphorylation of the hydroxyl group of 4-methyl-5-beta-hydroxyethylthiazole (THZ). The sequence is that of Hydroxyethylthiazole kinase from Methanococcus maripaludis (strain C7 / ATCC BAA-1331).